A 282-amino-acid chain; its full sequence is ATP phosphoribosyltransferase (282 aa).

Belongs to the ATP phosphoribosyltransferase family. Long subfamily. Mg(2+) serves as cofactor.

It localises to the cytoplasm. It catalyses the reaction 1-(5-phospho-beta-D-ribosyl)-ATP + diphosphate = 5-phospho-alpha-D-ribose 1-diphosphate + ATP. The protein operates within amino-acid biosynthesis; L-histidine biosynthesis; L-histidine from 5-phospho-alpha-D-ribose 1-diphosphate: step 1/9. With respect to regulation, feedback inhibited by histidine. Catalyzes the condensation of ATP and 5-phosphoribose 1-diphosphate to form N'-(5'-phosphoribosyl)-ATP (PR-ATP). Has a crucial role in the pathway because the rate of histidine biosynthesis seems to be controlled primarily by regulation of HisG enzymatic activity. The protein is ATP phosphoribosyltransferase of Halobacterium salinarum (strain ATCC 29341 / DSM 671 / R1).